We begin with the raw amino-acid sequence, 499 residues long: Low-affinity inorganic phosphate transporter PitB (499 aa).

10 consecutive transmembrane segments (helical) span residues 5-25 (FVGLDIYTGLLLLLALAFVLF), 52-72 (LAVVMAAFFNFFGVLLGGLSV), 94-114 (LAMVFSMLLAAIIWNLGTWFF), 124-144 (LIGAIIGIGLTNALLTGSSVM), 155-175 (IFSSLIVSPIVGLVIAGGLIF), 207-227 (PFWTRIALIVSAAGVAFSHGA), 233-253 (GIGLVMLVLVGIAPAGFVVNM), 382-402 (APVWIIMAVALALGIGTMIGW), 430-450 (AAVSIGLASYIGMPVSTTHVL), and 473-493 (ILMAWVFTLPAAIFLSGGLYW).

Belongs to the inorganic phosphate transporter (PiT) (TC 2.A.20) family. Pit subfamily.

It localises to the cell inner membrane. It catalyses the reaction phosphate(in) + H(+)(in) = phosphate(out) + H(+)(out). Low-affinity inorganic phosphate transporter. The chain is Low-affinity inorganic phosphate transporter PitB from Escherichia coli (strain K12).